Reading from the N-terminus, the 340-residue chain is Myb-related protein Zm1 (340 aa).

2 consecutive HTH myb-type domains span residues 11 to 63 (KVGL…INYL) and 64 to 118 (RPDL…KKKV). 2 DNA-binding regions (H-T-H motif) span residues 39 to 63 (WRALPKQAGLLRCGKSCRLRWINYL) and 91 to 114 (WSKIAACLPGRTDNEIKNVWNTHL). Basic residues predominate over residues 116–126 (KKVAQREKKKA). Disordered regions lie at residues 116-173 (KKVA…DATD) and 190-209 (DGAPPAAQPMPSPSSSSSLT). Positions 133-166 (AGTPATAPLSSATSSTTTHNSSGGSDSGDQCGTS) are enriched in low complexity.

The protein localises to the nucleus. In terms of biological role, transcription factor that positively regulates genes involved in anthocyanin biosynthesis such as A1. This chain is Myb-related protein Zm1, found in Zea mays (Maize).